A 1203-amino-acid chain; its full sequence is Regulator of telomere elongation helicase 1 (1203 aa).

Residues 7-296 (NGVTVDFPFQ…ARVTQQGELQ (290 aa)) enclose the Helicase ATP-binding domain. 42-49 (SPTGTGKT) is an ATP binding site. [4Fe-4S] cluster-binding residues include cysteine 145, cysteine 163, cysteine 172, and cysteine 207. The Nuclear localization signal signature appears at 151–167 (KKQESNHMQISLCRKKV). Positions 250–253 (DEAH) match the DEAH box motif. The Nuclear localization signal motif lies at 871-877 (QKGGRKK). Disordered regions lie at residues 998–1020 (QLDP…TSKG) and 1120–1203 (TTGK…RSKQ). Positions 1123–1134 (KDLELEGPRDES) are enriched in basic and acidic residues. Positions 1160-1167 (QSKISSFF) match the PIP-box motif. Basic and acidic residues predominate over residues 1169-1181 (QRPDESVRSDDTT).

The protein belongs to the helicase family. RAD3/XPD subfamily. Interacts with TERF1. Interacts (via PIP-box) with PCNA; the interaction is direct and essential for suppressing telomere fragility. Interacts with MMS19; the interaction mediates the association of RTEL1 with the cytosolic iron-sulfur protein assembly (CIA) complex.

It localises to the nucleus. It catalyses the reaction ATP + H2O = ADP + phosphate + H(+). Its function is as follows. A probable ATP-dependent DNA helicase implicated in telomere-length regulation, DNA repair and the maintenance of genomic stability. Acts as an anti-recombinase to counteract toxic recombination and limit crossover during meiosis. Regulates meiotic recombination and crossover homeostasis by physically dissociating strand invasion events and thereby promotes noncrossover repair by meiotic synthesis dependent strand annealing (SDSA) as well as disassembly of D loop recombination intermediates. Also disassembles T loops and prevents telomere fragility by counteracting telomeric G4-DNA structures, which together ensure the dynamics and stability of the telomere. This Mus spretus (Western Mediterranean mouse) protein is Regulator of telomere elongation helicase 1 (Rtel1).